We begin with the raw amino-acid sequence, 149 residues long: Down syndrome critical region protein 9 (149 aa).

The disordered stretch occupies residues 1 to 41; sequence MGRICPVNSRARRLRARPGRPSGDSLPYHQLQGGAPRLWSP.

The chain is Down syndrome critical region protein 9 (DSCR9) from Pan troglodytes (Chimpanzee).